The primary structure comprises 386 residues: Acyl-lipid omega-3 desaturase (cytochrome b5), endoplasmic reticulum (386 aa).

The interval 1 to 30 (MVVAMDQRTNVNGDPGAGDRKKEERFDPSA) is disordered. Positions 17–27 (AGDRKKEERFD) are enriched in basic and acidic residues. Residues 63 to 83 (IIAVAALAIAAVYVDSWFLWP) form a helical membrane-spanning segment. The Histidine box-1 signature appears at 101–105 (HDCGH). Residues 137 to 141 (HRTHH) carry the Histidine box-2 motif. 2 helical membrane passes run 220 to 240 (WSIM…LAVL) and 242 to 262 (VYGV…YLHH). Residues 304-308 (HVIHH) carry the Histidine box-3 motif.

Belongs to the fatty acid desaturase type 1 family. Abundant in leaves and seedlings. Barely detectable in root tissue.

The protein resides in the endoplasmic reticulum membrane. The enzyme catalyses a (9Z,12Z)-octadecadienoyl-containing glycerolipid + 2 Fe(II)-[cytochrome b5] + O2 + 2 H(+) = (9Z,12Z,15Z)-octadecatrienoyl-containing glycerolipid + 2 Fe(III)-[cytochrome b5] + 2 H2O. Its pathway is lipid metabolism; polyunsaturated fatty acid biosynthesis. In terms of biological role, microsomal (ER) omega-3 fatty acid desaturase introduces the third double bond in the biosynthesis of 18:3 fatty acids, important constituents of plant membranes. It is thought to use cytochrome b5 as an electron donor and to act on fatty acids esterified to phosphatidylcholine and, possibly, other phospholipids. This Arabidopsis thaliana (Mouse-ear cress) protein is Acyl-lipid omega-3 desaturase (cytochrome b5), endoplasmic reticulum.